A 317-amino-acid chain; its full sequence is Heme A synthase (317 aa).

At 1–6 (MQRSLK) the chain is on the cytoplasmic side. A helical membrane pass occupies residues 7–27 (WFASATTLAMLFVLIGGALVT). The Extracellular segment spans residues 28-62 (KTGSGMGCGRSWPLCNGQWVPDHITPELIIELSHR). A disulfide bond links cysteine 35 and cysteine 42. Glutamate 58 is a catalytic residue. Histidine 61 serves as a coordination point for heme o. Residues 63-83 (LVSGLAGIMVLILSIWAWRAI) form a helical membrane-spanning segment. The Cytoplasmic segment spans residues 84 to 90 (GHVQETK). The chain crosses the membrane as a helical span at residues 91 to 111 (FLAVISFVFLVLQGLIGAAAV). Over 112-121 (VWGQSDFVLA) the chain is Extracellular. A helical transmembrane segment spans residues 122–142 (LHFGISLISFAAVLLLTLLIF). Residue histidine 123 coordinates heme o. The Cytoplasmic segment spans residues 143–159 (EIDKTFSAASLSLDGKM). The chain crosses the membrane as a helical span at residues 160–180 (RFHIYGITIYSYIVVYTGALV). The Extracellular segment spans residues 181 to 211 (RHTNASLACPSWPLCAKTRLLPVQFHEWVQM). Residues cysteine 189 and cysteine 195 are joined by a disulfide bond. Residues 212-232 (GHRLAAAVIIIWIAAAAIHAV) traverse the membrane as a helical segment. Histidine 213 is a heme b binding site. Residues 233 to 243 (RHYRRQPVIYY) lie on the Cytoplasmic side of the membrane. The chain crosses the membrane as a helical span at residues 244 to 264 (GWLIALLLVLAQMTTGALVVF). At 265 to 270 (TQLNLY) the chain is on the extracellular side. Residues 271–291 (IALAHAFFISCLFGVLSYLLL) form a helical membrane-spanning segment. Histidine 275 contributes to the heme b binding site. The Cytoplasmic segment spans residues 292–317 (LALRTRRAPVKAADHSAGEAAPATLK).

Belongs to the COX15/CtaA family. Type 1 subfamily. As to quaternary structure, interacts with CtaB. It depends on heme b as a cofactor.

It localises to the cell membrane. It catalyses the reaction Fe(II)-heme o + 2 A + H2O = Fe(II)-heme a + 2 AH2. Its pathway is porphyrin-containing compound metabolism; heme A biosynthesis; heme A from heme O: step 1/1. Catalyzes the conversion of heme O to heme A by two successive hydroxylations of the methyl group at C8. The first hydroxylation forms heme I, the second hydroxylation results in an unstable dihydroxymethyl group, which spontaneously dehydrates, resulting in the formyl group of heme A. The chain is Heme A synthase from Geobacillus kaustophilus (strain HTA426).